Here is a 327-residue protein sequence, read N- to C-terminus: Glycerol-3-phosphate dehydrogenase [NAD(P)+] (327 aa).

The NADPH site is built by Trp11, Arg30, and Lys103. Sn-glycerol 3-phosphate-binding residues include Lys103, Gly131, and Ser133. Residue Ala135 coordinates NADPH. Residues Lys186, Asp243, Ser253, Arg254, and Asn255 each contribute to the sn-glycerol 3-phosphate site. Catalysis depends on Lys186, which acts as the Proton acceptor. Arg254 contributes to the NADPH binding site. NADPH-binding residues include Val281 and Glu283.

This sequence belongs to the NAD-dependent glycerol-3-phosphate dehydrogenase family.

The protein resides in the cytoplasm. The enzyme catalyses sn-glycerol 3-phosphate + NAD(+) = dihydroxyacetone phosphate + NADH + H(+). It carries out the reaction sn-glycerol 3-phosphate + NADP(+) = dihydroxyacetone phosphate + NADPH + H(+). It participates in membrane lipid metabolism; glycerophospholipid metabolism. Functionally, catalyzes the reduction of the glycolytic intermediate dihydroxyacetone phosphate (DHAP) to sn-glycerol 3-phosphate (G3P), the key precursor for phospholipid synthesis. The sequence is that of Glycerol-3-phosphate dehydrogenase [NAD(P)+] from Wolbachia sp. subsp. Drosophila simulans (strain wRi).